The sequence spans 191 residues: Programmed cell death protein 6 (191 aa).

A2 is subject to N-acetylalanine. EF-hand domains lie at 23–58 (PDQS…GTWT), 59–89 (PFNP…TGVW), 90–125 (KYIT…FGYR), 126–161 (LSDQ…LQRL), and 162–191 (TDIF…FSIV). Residues D36, D38, S40, V42, and E47 each contribute to the Ca(2+) site. D103, D105, S107, M109, and E114 together coordinate Ca(2+). Mg(2+) contacts are provided by D169, D171, D173, and W175.

As to quaternary structure, homodimer and heterodimer; heterodimerizes (via the EF-hand 5) with PEF1. Isoform 1 and isoform 2 self-associate; probably forming homodimers. Interacts with CPNE4 (via VWFA domain). Interacts with PDCD6IP; the interaction is calcium-dependent. Interacts with RBM22. Interacts with PLSCR4. Interacts with ANXA7 and TSG101. Interacts with DAPK1. Interacts with SEC31A; the interaction is calcium-dependent and promotes monoubiquitination of SEC31A. Interacts with ANXA11 (via N-terminus); the interaction is calcium-dependent. Interacts with PLSCR3 (via N-terminus); the interaction is calcium-dependent. Interacts with MCOLN1; the interaction is calcium-dependent. Interacts with KDR; the interaction is calcium-dependent. Interacts with HEBP2; the interaction is calcium-dependent. Interacts with TFG. Isoform 1: Interacts with SHISA5, leading to stabilize it. Isoform 2: Does not interact with SHISA5. Isoform 2: Does not interact with PDCD6IP, TSG101, ANXA7 and ANXA11.

The protein resides in the endoplasmic reticulum membrane. Its subcellular location is the cytoplasmic vesicle. It localises to the COPII-coated vesicle membrane. It is found in the cytoplasm. The protein localises to the nucleus. The protein resides in the endosome. Calcium sensor that plays a key role in processes such as endoplasmic reticulum (ER)-Golgi vesicular transport, endosomal biogenesis or membrane repair. Acts as an adapter that bridges unrelated proteins or stabilizes weak protein-protein complexes in response to calcium: calcium-binding triggers exposure of apolar surface, promoting interaction with different sets of proteins thanks to 3 different hydrophobic pockets, leading to translocation to membranes. Involved in ER-Golgi transport. Regulates ER-Golgi transport by promoting the association between PDCD6IP and TSG101, thereby bridging together the ESCRT-III and ESCRT-I complexes. Together with PEF1, acts as a calcium-dependent adapter for the BCR(KLHL12) complex, a complex involved in ER-Golgi transport by regulating the size of COPII coats. In response to cytosolic calcium increase, the heterodimer formed with PEF1 interacts with, and bridges together the BCR(KLHL12) complex and SEC31 (SEC31A or SEC31B), promoting monoubiquitination of SEC31 and subsequent collagen export, which is required for neural crest specification. Involved in the regulation of the distribution and function of MCOLN1 in the endosomal pathway. Promotes localization and polymerization of TFG at endoplasmic reticulum exit site. Required for T-cell receptor-, Fas-, and glucocorticoid-induced apoptosis. May mediate Ca(2+)-regulated signals along the death pathway: interaction with DAPK1 can accelerate apoptotic cell death by increasing caspase-3 activity. Its role in apoptosis may however be indirect, as suggested by knockout experiments. May inhibit KDR/VEGFR2-dependent angiogenesis; the function involves inhibition of VEGF-induced phosphorylation of the Akt signaling pathway. Its function is as follows. Has a lower Ca(2+) affinity than isoform 1. The chain is Programmed cell death protein 6 from Rattus norvegicus (Rat).